The primary structure comprises 298 residues: MNHIQEAFLNTLKVERNFSEHTLKSYQDDLIQFNQFLEQEHLQLNTFEYRDARNYLSYLYSNHLKRTSVSRKISTLRTFYEYWMTLDENIINPFVQLVHPKKEKYLPQFFYEEEMEALFKTVEEDTSKSLRDRVILELLYATGIRVSELVNIKKQDIDFYANGVTVFGKGSKERFVPFGAYCRQSIENYLEHFKPIQSCNHDFLIVNMKGEAITERGVRYVLNDIVKRTAGVSEIHPHKLRHTFATHLLNQGADLRTVQSLLGHVNLSTTGKYTHVSNQQLRKVYLNAHPRAKKENET.

The Core-binding (CB) domain maps to 1 to 84 (MNHIQEAFLN…TLRTFYEYWM (84 aa)). Residues 105 to 286 (YLPQFFYEEE…SNQQLRKVYL (182 aa)) form the Tyr recombinase domain. Active-site residues include R145, K169, H238, R241, and H264. The O-(3'-phospho-DNA)-tyrosine intermediate role is filled by Y273.

It belongs to the 'phage' integrase family. XerC subfamily. In terms of assembly, forms a cyclic heterotetrameric complex composed of two molecules of XerC and two molecules of XerD.

Its subcellular location is the cytoplasm. Functionally, site-specific tyrosine recombinase, which acts by catalyzing the cutting and rejoining of the recombining DNA molecules. The XerC-XerD complex is essential to convert dimers of the bacterial chromosome into monomers to permit their segregation at cell division. It also contributes to the segregational stability of plasmids. In Staphylococcus aureus (strain bovine RF122 / ET3-1), this protein is Tyrosine recombinase XerC.